The primary structure comprises 147 residues: Hemoglobin subunit gamma-2 (147 aa).

Positions 3–147 constitute a Globin domain; it reads HFTEEDKATI…VASALSSRYH (145 aa). T13 is modified (phosphothreonine). Phosphoserine is present on residues S45, S51, and S53. K60 carries the post-translational modification N6-acetyllysine. H64 contacts heme b. K83 carries the N6-acetyllysine modification. H93 contributes to the heme b binding site. Position 94 is an S-nitrosocysteine (C94). 3 positions are modified to phosphoserine: S140, S143, and S144.

It belongs to the globin family. In terms of assembly, heterotetramer of two alpha chains and two gamma chains in fetal hemoglobin (Hb F). Red blood cells.

Gamma chains make up the fetal hemoglobin F, in combination with alpha chains. In Pongo pygmaeus (Bornean orangutan), this protein is Hemoglobin subunit gamma-2 (HBG2).